The following is a 207-amino-acid chain: Glycerol-3-phosphate acyltransferase 1 (207 aa).

5 consecutive transmembrane segments (helical) span residues 3 to 23, 53 to 73, 85 to 105, 127 to 147, and 154 to 174; these read YVIASLLGYIFGCIHGSQIVG, IVVALIDIFKATAAIFLLLIL, HIYIYLTALFVIIGHNYPITM, IALIGIGVLILFTIATDYLAV, and ISFLITTYYIFGLAPFFIVVG.

It belongs to the PlsY family. As to quaternary structure, probably interacts with PlsX.

It localises to the cell membrane. It catalyses the reaction an acyl phosphate + sn-glycerol 3-phosphate = a 1-acyl-sn-glycero-3-phosphate + phosphate. It participates in lipid metabolism; phospholipid metabolism. In terms of biological role, catalyzes the transfer of an acyl group from acyl-phosphate (acyl-PO(4)) to glycerol-3-phosphate (G3P) to form lysophosphatidic acid (LPA). This enzyme utilizes acyl-phosphate as fatty acyl donor, but not acyl-CoA or acyl-ACP. The protein is Glycerol-3-phosphate acyltransferase 1 of Oceanobacillus iheyensis (strain DSM 14371 / CIP 107618 / JCM 11309 / KCTC 3954 / HTE831).